The chain runs to 116 residues: uncharacterized protein (116 aa).

Positions S77–R116 are disordered.

This is an uncharacterized protein from Frog virus 3 (isolate Goorha) (FV-3).